Consider the following 334-residue polypeptide: MKTLGEFIIEKQAEYPEAKGELSGILSSIRLAAKIIHREINRAGLSQDILGVAGSENIQGEAQMKLDVFANETMKKALLAREEVAGFASEEDDNFVAFENDRAKNAKYILMTDPLDGSSNIDVNVSVGTIFSIYKRVSPIGSPVTMEDFLQEGRKQVASGYVTYGSSTMLVYTTGNGVNGFTYDPSLGLFILSHPDMKMPTEGKYYSINEGQYVTFPMGVKKFIKYCQESDEATKRPYSSRYIGSLVSDFHRNLLKGGIYIYPTSTVYPKGKLRLLYEGNPMAFLAEQAGGMATDGFNPILDIKPSELHQRVPFFVGSTSMVKQADKFMQECAE.

Residues glutamate 90, aspartate 113, leucine 115, and aspartate 116 each contribute to the Mg(2+) site. Residues 116–119, asparagine 209, tyrosine 242, and lysine 272 contribute to the substrate site; that span reads DGSS. Glutamate 278 lines the Mg(2+) pocket.

It belongs to the FBPase class 1 family. Homotetramer. Mg(2+) is required as a cofactor.

Its subcellular location is the cytoplasm. It catalyses the reaction beta-D-fructose 1,6-bisphosphate + H2O = beta-D-fructose 6-phosphate + phosphate. It functions in the pathway carbohydrate biosynthesis; gluconeogenesis. This Actinobacillus pleuropneumoniae serotype 7 (strain AP76) protein is Fructose-1,6-bisphosphatase class 1.